The following is a 199-amino-acid chain: Probable nicotinate-nucleotide adenylyltransferase (199 aa).

This sequence belongs to the NadD family.

The catalysed reaction is nicotinate beta-D-ribonucleotide + ATP + H(+) = deamido-NAD(+) + diphosphate. It participates in cofactor biosynthesis; NAD(+) biosynthesis; deamido-NAD(+) from nicotinate D-ribonucleotide: step 1/1. Functionally, catalyzes the reversible adenylation of nicotinate mononucleotide (NaMN) to nicotinic acid adenine dinucleotide (NaAD). In Leptospira interrogans serogroup Icterohaemorrhagiae serovar copenhageni (strain Fiocruz L1-130), this protein is Probable nicotinate-nucleotide adenylyltransferase.